A 446-amino-acid polypeptide reads, in one-letter code: MGRTYFVEEAVGRYLSDLSVKFKPYVTGLLIGQCSPQRDYIIRAARTPPKEEQKEGNTSPSKLDSIDEEWFTAHASQISRMLPGGLLVLSVFIIATPELSKDCQNTLRKLIFSIEKSLTKRRLWKPADEDVSDRAALQICSATKKIVCRTYDVQDPKGSAKPADWKYQSALSASWLSLGCTVNVNIHIPLLATSPNHDLEKNTKNGLNRWSKQIEDSIFLINGQVKDNDIELLEGQKKLRGNTHSGTQIFDVKVLTQLSQGSSHRSTATVQVCSGSINLKGAVKCRAYVHNNKPKVKEAVLALKRDIINTLSDRCEILFEDLILNEGRCKKNFERVYHVLPQRLFVPFAGSNVMLSDYKFGDEAAGEIQERFVEMLDQFVQAEDIHIAEEVNTVGICSLSEKMDDTQLEQLTKATLLLKLQQNMGVVIAVAVAVFASIFSFNYFSD.

2 helical membrane-spanning segments follow: residues 81-101 (MLPG…ELSK) and 424-444 (MGVV…FNYF).

This sequence belongs to the ODR-4 family.

It localises to the membrane. May play a role in the trafficking of a subset of G-protein coupled receptors. In Gallus gallus (Chicken), this protein is Protein odr-4 homolog (ODR4).